Reading from the N-terminus, the 412-residue chain is Multifunctional CCA protein (412 aa).

Residues Gly8 and Arg11 each coordinate ATP. Positions 8 and 11 each coordinate CTP. Mg(2+)-binding residues include Glu21 and Asp23. Positions 91, 137, and 140 each coordinate ATP. Residues Arg91, Arg137, and Arg140 each coordinate CTP. Residues 228-329 (TGIHTLMTLA…LKLFNAIDVW (102 aa)) form the HD domain.

The protein belongs to the tRNA nucleotidyltransferase/poly(A) polymerase family. Bacterial CCA-adding enzyme type 1 subfamily. Monomer. Can also form homodimers and oligomers. The cofactor is Mg(2+). It depends on Ni(2+) as a cofactor.

The catalysed reaction is a tRNA precursor + 2 CTP + ATP = a tRNA with a 3' CCA end + 3 diphosphate. It carries out the reaction a tRNA with a 3' CCA end + 2 CTP + ATP = a tRNA with a 3' CCACCA end + 3 diphosphate. Functionally, catalyzes the addition and repair of the essential 3'-terminal CCA sequence in tRNAs without using a nucleic acid template. Adds these three nucleotides in the order of C, C, and A to the tRNA nucleotide-73, using CTP and ATP as substrates and producing inorganic pyrophosphate. tRNA 3'-terminal CCA addition is required both for tRNA processing and repair. Also involved in tRNA surveillance by mediating tandem CCA addition to generate a CCACCA at the 3' terminus of unstable tRNAs. While stable tRNAs receive only 3'-terminal CCA, unstable tRNAs are marked with CCACCA and rapidly degraded. The polypeptide is Multifunctional CCA protein (Yersinia pseudotuberculosis serotype I (strain IP32953)).